The sequence spans 544 residues: Chaperonin GroEL (544 aa).

Residues 30-33, K51, 87-91, G415, and D495 contribute to the ATP site; these read TLGP and DGTTT.

It belongs to the chaperonin (HSP60) family. As to quaternary structure, forms a cylinder of 14 subunits composed of two heptameric rings stacked back-to-back. Interacts with the co-chaperonin GroES.

Its subcellular location is the cytoplasm. The enzyme catalyses ATP + H2O + a folded polypeptide = ADP + phosphate + an unfolded polypeptide.. Functionally, together with its co-chaperonin GroES, plays an essential role in assisting protein folding. The GroEL-GroES system forms a nano-cage that allows encapsulation of the non-native substrate proteins and provides a physical environment optimized to promote and accelerate protein folding. The protein is Chaperonin GroEL of Neisseria meningitidis serogroup C (strain 053442).